Consider the following 484-residue polypeptide: Replication factor C large subunit (484 aa).

46–53 (GPPGSGKT) contributes to the ATP binding site. Positions 463–478 (NADTKEKEKKDPKKQA) are enriched in basic and acidic residues. The segment at 463-484 (NADTKEKEKKDPKKQATLDSFF) is disordered.

The protein belongs to the activator 1 small subunits family. RfcL subfamily. In terms of assembly, heteromultimer composed of small subunits (RfcS) and large subunits (RfcL).

Part of the RFC clamp loader complex which loads the PCNA sliding clamp onto DNA. This Methanococcus maripaludis (strain C6 / ATCC BAA-1332) protein is Replication factor C large subunit.